The sequence spans 100 residues: Small ribosomal subunit protein uS14c (100 aa).

It belongs to the universal ribosomal protein uS14 family. In terms of assembly, part of the 30S ribosomal subunit.

The protein localises to the plastid. Its subcellular location is the chloroplast. In terms of biological role, binds 16S rRNA, required for the assembly of 30S particles. This chain is Small ribosomal subunit protein uS14c, found in Glycine max (Soybean).